An 854-amino-acid polypeptide reads, in one-letter code: DNA mismatch repair protein MutS (854 aa).

616-623 (GPNMGGKS) lines the ATP pocket.

It belongs to the DNA mismatch repair MutS family.

Its function is as follows. This protein is involved in the repair of mismatches in DNA. It is possible that it carries out the mismatch recognition step. This protein has a weak ATPase activity. This Pectobacterium atrosepticum (strain SCRI 1043 / ATCC BAA-672) (Erwinia carotovora subsp. atroseptica) protein is DNA mismatch repair protein MutS.